The primary structure comprises 494 residues: Casein kinase I homolog HRR25 (494 aa).

Positions 9–278 (FRIGRKIGSG…LARLFKDLSI (270 aa)) constitute a Protein kinase domain. ATP contacts are provided by residues 15-23 (IGSGSFGDI) and lysine 38. Aspartate 128 (proton acceptor) is an active-site residue. Serine 143 is subject to Phosphoserine. Residues 394-494 (RQQQPQQQVQ…DKPAGQSIWL (101 aa)) form a disordered region. 2 stretches are compositionally biased toward low complexity: residues 395–418 (QQQPQQQVQSSQPQPQPQQLQQQP) and 432–444 (QQQQRDSQEQQQQ). Polar residues predominate over residues 445–479 (VPMATTRATQYPPQINSNNFNTNQASVPPQMRSNP).

This sequence belongs to the protein kinase superfamily. CK1 Ser/Thr protein kinase family. Casein kinase I subfamily. As to quaternary structure, interacts with HRI1. Interacts with ELP1/IKI3; the interaction leads to ELP1/IKI3 phosphorylation.

The protein localises to the cytoplasm. Its subcellular location is the nucleus. It localises to the nucleolus. It is found in the nucleoplasm. The catalysed reaction is L-seryl-[protein] + ATP = O-phospho-L-seryl-[protein] + ADP + H(+). It carries out the reaction L-threonyl-[protein] + ATP = O-phospho-L-threonyl-[protein] + ADP + H(+). Protein kinase which phosphorylates serine and threonine residues. Can use casein as a substrate. Phosphorylates elongator complex member ELP1/IKI3 on 'Ser-1198' and 'Ser-1202' which promotes the tRNA modification function of the complex. Associated with repair of damaged DNA and meiosis. This is Casein kinase I homolog HRR25 (HRR25) from Saccharomyces cerevisiae (strain ATCC 204508 / S288c) (Baker's yeast).